The primary structure comprises 216 residues: Holliday junction branch migration complex subunit RuvA (216 aa).

The interval 1–64 (MISFIKGVLI…EDAQQLYGFK (64 aa)) is domain I. The tract at residues 65-143 (SKVDKKVFQE…KMANEIYAQT (79 aa)) is domain II. The tract at residues 144–163 (SGTTTTSQDSQAQQAPTSVV) is flexible linker. The segment at 164–216 (LANSIFNESVDALLALGYKQKDAEKMARSAMGDATTAAEVIRKALQGSIKSKR) is domain III.

The protein belongs to the RuvA family. In terms of assembly, homotetramer. Forms an RuvA(8)-RuvB(12)-Holliday junction (HJ) complex. HJ DNA is sandwiched between 2 RuvA tetramers; dsDNA enters through RuvA and exits via RuvB. An RuvB hexamer assembles on each DNA strand where it exits the tetramer. Each RuvB hexamer is contacted by two RuvA subunits (via domain III) on 2 adjacent RuvB subunits; this complex drives branch migration. In the full resolvosome a probable DNA-RuvA(4)-RuvB(12)-RuvC(2) complex forms which resolves the HJ.

It is found in the cytoplasm. Functionally, the RuvA-RuvB-RuvC complex processes Holliday junction (HJ) DNA during genetic recombination and DNA repair, while the RuvA-RuvB complex plays an important role in the rescue of blocked DNA replication forks via replication fork reversal (RFR). RuvA specifically binds to HJ cruciform DNA, conferring on it an open structure. The RuvB hexamer acts as an ATP-dependent pump, pulling dsDNA into and through the RuvAB complex. HJ branch migration allows RuvC to scan DNA until it finds its consensus sequence, where it cleaves and resolves the cruciform DNA. The protein is Holliday junction branch migration complex subunit RuvA of Francisella tularensis subsp. tularensis (strain WY96-3418).